The sequence spans 168 residues: MHELTLQQVNRLDDDSFVDAFGEIYEHSPWVAERARSSRPFSSVDELRSAMKRAVEDASREKQLQLLRAHPDLGERTEMTDASEAEQASAELDSLSRSQYETFQRLNETYRERFGFPFVMAVKDENPDAIAAAMERRVDHSESTEFRTALDEVHTIAELRLAERFSSE.

The active-site Proton donor; for OHCU decarboxylase activity is the His70. A compositionally biased stretch (basic and acidic residues) spans His70 to Met79. Positions His70–Asp93 are disordered. Substrate is bound by residues Pro71, Ser83 to Gln87, and Phe118 to Val122.

Belongs to the OHCU decarboxylase family.

It catalyses the reaction 5-hydroxy-2-oxo-4-ureido-2,5-dihydro-1H-imidazole-5-carboxylate + H(+) = (S)-allantoin + CO2. Its pathway is purine metabolism; urate degradation; (S)-allantoin from urate: step 3/3. Catalyzes the stereoselective decarboxylation of 2-oxo-4-hydroxy-4-carboxy-5-ureidoimidazoline (OHCU) to (S)-allantoin. The sequence is that of 2-oxo-4-hydroxy-4-carboxy-5-ureidoimidazoline decarboxylase from Haloferax volcanii (strain ATCC 29605 / DSM 3757 / JCM 8879 / NBRC 14742 / NCIMB 2012 / VKM B-1768 / DS2) (Halobacterium volcanii).